Here is a 314-residue protein sequence, read N- to C-terminus: Taste receptor type 2 member 42 (314 aa).

Over methionine 1 to lysine 7 the chain is Extracellular. The helical transmembrane segment at isoleucine 8 to glycine 28 threads the bilayer. The Cytoplasmic segment spans residues leucine 29–cysteine 50. The helical transmembrane segment at leucine 51–leucine 71 threads the bilayer. Residues alanine 72 to threonine 101 lie on the Extracellular side of the membrane. A helical transmembrane segment spans residues cysteine 102–leucine 122. Residues arginine 123–asparagine 127 lie on the Cytoplasmic side of the membrane. The helical transmembrane segment at glycine 128–leucine 148 threads the bilayer. The Extracellular portion of the chain corresponds to lysine 149–leucine 187. N-linked (GlcNAc...) asparagine glycosylation is present at asparagine 163. Residues threonine 188–valine 208 form a helical membrane-spanning segment. At arginine 209 to serine 238 the chain is on the cytoplasmic side. Residues phenylalanine 239–methionine 259 traverse the membrane as a helical segment. The Extracellular segment spans residues serine 260–tyrosine 265. Residues isoleucine 266–leucine 286 traverse the membrane as a helical segment. The Cytoplasmic segment spans residues glycine 287–leucine 314.

This sequence belongs to the G-protein coupled receptor T2R family.

It localises to the membrane. Its function is as follows. Receptor that may play a role in the perception of bitterness and is gustducin-linked. May play a role in sensing the chemical composition of the gastrointestinal content. The activity of this receptor may stimulate alpha gustducin, mediate PLC-beta-2 activation and lead to the gating of TRPM5. The chain is Taste receptor type 2 member 42 (TAS2R42) from Pongo pygmaeus (Bornean orangutan).